Consider the following 297-residue polypeptide: MKHIIHASGNVNGTARNNSDCPHVALPEEIFFIISITGVLENLIIILAVIKNKNLQFPMYFFICSLAISDMLGSLYKILESILIMFRNMGYFKPHGSFETTTDDIIDTMFILSLLGSIFSLLAIAVDRYITIFHALQYHSIVTMHRTIAVLSIIWTFCIGSGITMVLFSHHVPTVLTFTSLFPLMLVFILCLYVHMFLMARSHARNISTLPRGNMRGAITLTILLGVFIFCWAPFILHILLVTFCPNNPYCTCYISLFHVNGMLIMCNAVIDPFIYAFRSPELRSAFRRMISYSKCL.

Over 1–23 the chain is Extracellular; the sequence is MKHIIHASGNVNGTARNNSDCPH. 2 N-linked (GlcNAc...) asparagine glycosylation sites follow: N12 and N17. 2 disulfides stabilise this stretch: C21-C253 and C245-C251. Residues 24 to 49 form a helical membrane-spanning segment; the sequence is VALPEEIFFIISITGVLENLIIILAV. Over 50 to 58 the chain is Cytoplasmic; that stretch reads IKNKNLQFP. A helical transmembrane segment spans residues 59-79; it reads MYFFICSLAISDMLGSLYKIL. The Extracellular portion of the chain corresponds to 80 to 104; that stretch reads ESILIMFRNMGYFKPHGSFETTTDD. The helical transmembrane segment at 105–126 threads the bilayer; that stretch reads IIDTMFILSLLGSIFSLLAIAV. Over 127–147 the chain is Cytoplasmic; sequence DRYITIFHALQYHSIVTMHRT. A helical transmembrane segment spans residues 148-168; sequence IAVLSIIWTFCIGSGITMVLF. At 169 to 180 the chain is on the extracellular side; it reads SHHVPTVLTFTS. The chain crosses the membrane as a helical span at residues 181–199; sequence LFPLMLVFILCLYVHMFLM. Topologically, residues 200-217 are cytoplasmic; sequence ARSHARNISTLPRGNMRG. A helical transmembrane segment spans residues 218–244; sequence AITLTILLGVFIFCWAPFILHILLVTF. The Extracellular portion of the chain corresponds to 245–256; it reads CPNNPYCTCYIS. A helical transmembrane segment spans residues 257–278; the sequence is LFHVNGMLIMCNAVIDPFIYAF. Topologically, residues 279-297 are cytoplasmic; the sequence is RSPELRSAFRRMISYSKCL. C296 carries S-palmitoyl cysteine lipidation.

Belongs to the G-protein coupled receptor 1 family. As to quaternary structure, homodimer. Interacts with corticotropin (ACTH). Interacts with MRAP; this interaction targets MC2R to the plasma membrane. Interacts with MRAP2; competing with MRAP for binding to MC2R and impairing the binding of corticotropin (ACTH). Ubiquitinated by MGRN1 that may be involved in post-endocytic trafficking and/or degradation of internalized receptor.

It localises to the cell membrane. In terms of biological role, hormone receptor primarily expressed in adrenal cortex that plays a key role in regulating adrenocortical function. Upon corticotropin (ACTH) binding, facilitates the release of adrenal glucocorticoids, including cortisol and corticosterone. In addition, MC2R is required for fetal and neonatal adrenal gland development. Mechanistically, activates adenylate cyclase (cAMP), the MAPK cascade as well as the cAMP-dependent protein kinase A pathway leading to steroidogenic factor 1/NR5A1-mediated transcriptional activation. In Cavia porcellus (Guinea pig), this protein is Adrenocorticotropic hormone receptor (MC2R).